Reading from the N-terminus, the 224-residue chain is Synaptonemal complex protein 3 (224 aa).

Coiled coils occupy residues 63 to 97 and 137 to 171; these read RVKC…WEER and HDSM…QSST.

As to quaternary structure, interacts with gras-1. Interacts with brc-1 and brd-1.

It localises to the chromosome. Its function is as follows. Plays a role in early meiotic events; during prophase I contributes to synaptonemal complex (SC) assembly, synapsis and chiasmata formation and stabilization of homologous chromosomes pairing. Required for restricting SC assembly to bridge paired chromosome axes. Required for the timely progression of meiotic crossover recombination. Required for the synapsis checkpoint. This is Synaptonemal complex protein 3 from Caenorhabditis elegans.